A 208-amino-acid polypeptide reads, in one-letter code: Probable GTP-binding protein EngB (208 aa).

The region spanning 29 to 203 (EGREVAFAGR…WDKLGEWLGI (175 aa)) is the EngB-type G domain. Residues 37-44 (GRSNAGKS), 64-68 (GRTQL), 82-85 (DLPG), 149-152 (TKAD), and 182-184 (FSA) each bind GTP. Mg(2+)-binding residues include Ser44 and Thr66.

It belongs to the TRAFAC class TrmE-Era-EngA-EngB-Septin-like GTPase superfamily. EngB GTPase family. It depends on Mg(2+) as a cofactor.

In terms of biological role, necessary for normal cell division and for the maintenance of normal septation. This chain is Probable GTP-binding protein EngB, found in Alcanivorax borkumensis (strain ATCC 700651 / DSM 11573 / NCIMB 13689 / SK2).